The following is a 64-amino-acid chain: Large ribosomal subunit protein bL35 (64 aa).

It belongs to the bacterial ribosomal protein bL35 family.

This is Large ribosomal subunit protein bL35 from Shewanella oneidensis (strain ATCC 700550 / JCM 31522 / CIP 106686 / LMG 19005 / NCIMB 14063 / MR-1).